Reading from the N-terminus, the 316-residue chain is Ribosomal RNA small subunit methyltransferase H (316 aa).

Residues 35–37, aspartate 55, phenylalanine 79, aspartate 101, and glutamine 108 contribute to the S-adenosyl-L-methionine site; that span reads GGH. The tract at residues 291 to 316 is disordered; the sequence is ALKPSDQEVELNPRSRSSVLRVAEKL.

It belongs to the methyltransferase superfamily. RsmH family.

The protein resides in the cytoplasm. It catalyses the reaction cytidine(1402) in 16S rRNA + S-adenosyl-L-methionine = N(4)-methylcytidine(1402) in 16S rRNA + S-adenosyl-L-homocysteine + H(+). In terms of biological role, specifically methylates the N4 position of cytidine in position 1402 (C1402) of 16S rRNA. The chain is Ribosomal RNA small subunit methyltransferase H from Vibrio cholerae serotype O1 (strain ATCC 39315 / El Tor Inaba N16961).